A 349-amino-acid chain; its full sequence is NADH-quinone oxidoreductase subunit H (349 aa).

A run of 8 helical transmembrane segments spans residues F11 to V31, G83 to I103, V116 to G136, I162 to V182, F200 to L220, L252 to F272, V288 to V308, and L323 to L343.

This sequence belongs to the complex I subunit 1 family. In terms of assembly, NDH-1 is composed of 14 different subunits. Subunits NuoA, H, J, K, L, M, N constitute the membrane sector of the complex.

Its subcellular location is the cell inner membrane. It catalyses the reaction a quinone + NADH + 5 H(+)(in) = a quinol + NAD(+) + 4 H(+)(out). Its function is as follows. NDH-1 shuttles electrons from NADH, via FMN and iron-sulfur (Fe-S) centers, to quinones in the respiratory chain. The immediate electron acceptor for the enzyme in this species is believed to be ubiquinone. Couples the redox reaction to proton translocation (for every two electrons transferred, four hydrogen ions are translocated across the cytoplasmic membrane), and thus conserves the redox energy in a proton gradient. This subunit may bind ubiquinone. The protein is NADH-quinone oxidoreductase subunit H of Bartonella henselae (strain ATCC 49882 / DSM 28221 / CCUG 30454 / Houston 1) (Rochalimaea henselae).